We begin with the raw amino-acid sequence, 423 residues long: Methionine aminopeptidase 2 (423 aa).

Positions 1 to 17 are enriched in basic and acidic residues; that stretch reads MTDVIDAKPEEAKKVPP. A disordered region spans residues 1–89; that stretch reads MTDVIDAKPE…IQPYKDDNAY (89 aa). Residues 18–29 show a composition bias toward acidic residues; the sequence is EVEDEDSGDESA. Basic residues predominate over residues 41-54; the sequence is KKKKKKKKPKKKKK. Histidine 176 contacts substrate. Positions 196, 207, and 276 each coordinate a divalent metal cation. Histidine 284 is a substrate binding site. A divalent metal cation is bound by residues glutamate 309 and glutamate 404.

This sequence belongs to the peptidase M24A family. Methionine aminopeptidase eukaryotic type 2 subfamily. Requires Co(2+) as cofactor. Zn(2+) is required as a cofactor. It depends on Mn(2+) as a cofactor. Fe(2+) serves as cofactor.

The protein localises to the cytoplasm. It carries out the reaction Release of N-terminal amino acids, preferentially methionine, from peptides and arylamides.. In terms of biological role, cotranslationally removes the N-terminal methionine from nascent proteins. The N-terminal methionine is often cleaved when the second residue in the primary sequence is small and uncharged (Met-Ala-, Cys, Gly, Pro, Ser, Thr, or Val). The protein is Methionine aminopeptidase 2 of Schizophyllum commune (strain H4-8 / FGSC 9210) (Split gill fungus).